We begin with the raw amino-acid sequence, 316 residues long: Methionyl-tRNA formyltransferase (316 aa).

112 to 115 provides a ligand contact to (6S)-5,6,7,8-tetrahydrofolate; that stretch reads SLLP.

It belongs to the Fmt family.

The enzyme catalyses L-methionyl-tRNA(fMet) + (6R)-10-formyltetrahydrofolate = N-formyl-L-methionyl-tRNA(fMet) + (6S)-5,6,7,8-tetrahydrofolate + H(+). Its function is as follows. Attaches a formyl group to the free amino group of methionyl-tRNA(fMet). The formyl group appears to play a dual role in the initiator identity of N-formylmethionyl-tRNA by promoting its recognition by IF2 and preventing the misappropriation of this tRNA by the elongation apparatus. The chain is Methionyl-tRNA formyltransferase from Actinobacillus pleuropneumoniae serotype 5b (strain L20).